The chain runs to 298 residues: Octopine catabolism/uptake operon regulatory protein OccR (298 aa).

The region spanning 1–58 is the HTH lysR-type domain; that stretch reads MNLRQVEAFRAVMLTGQMTAAAELMLVTQPAISRLIKDFEQATKLQLFERRGNHIIPT. The segment at residues 18–37 is a DNA-binding region (H-T-H motif); the sequence is MTAAAELMLVTQPAISRLIK.

The protein belongs to the LysR transcriptional regulatory family.

In terms of biological role, positive regulatory protein for the occ operon involved in octopine catabolism and uptake. Also acts as a negative regulator of its expression. The polypeptide is Octopine catabolism/uptake operon regulatory protein OccR (occR) (Agrobacterium tumefaciens (strain Ach5)).